The primary structure comprises 631 residues: MKVSTHHFLPSLLVALWSWATVAQAATHTFNWTTGWGNYNVDGNFERPVITCNGEFPWPDLKVKRGDRIQVYLTNGFDDRNTSLHFHGLSQNGTNMMDGPEMITQCPIAPGDTMLYNFTIDDNDGTYWYHSHTGGQYQDGMKGTLVVEPEDSLPFDYDEEVVVQLAEWYYDNVDTLDRKFMNVYNPTGAEPIPQNLIINNTRNMTWNVEPDTTYLLRIVNTGGFVSQYFWIEDHDMTVVEVDGVYVEKNTTSMLYITVAQRYSVLIHTKNDTSKNYAIMQKFDDTMLDVIPNDLMLNATSYMMYDKDGEKPEQSYVDSIDDFLDDFYLTPLDKVELYEDPDYTITVDVVMDNLKNGVNYAFFNNLTFTAPKVPTLMTALSAGKDALNPLVYGTNTNAFVLKKDEIIEIVLNNNDTGKHPFHLHGHIFQLVDRERGYDDAIGEGPHPFDPEDHNPFPDYPMMRDTVYVNPQSSIVLRFKADNPGVWFFHCHIEWHLKQGLALLLIEAPEEMQNTESQQLTDNHKQVCENVGLSWEGNAAGNTNDFLDLVGQNVQVANIPDGFTAKGIVAMTFSCLAGVLGLISLSTYGLMGVKKSEEEIIRDLGMDPDAVEKVDVSDINSDEDSSRTSKNIE.

Positions 1-25 are cleaved as a signal peptide; the sequence is MKVSTHHFLPSLLVALWSWATVAQA. Residues 26-564 lie on the Extracellular side of the membrane; that stretch reads ATHTFNWTTG…ANIPDGFTAK (539 aa). Asn31 and Asn81 each carry an N-linked (GlcNAc...) asparagine glycan. Plastocyanin-like domains are found at residues 50–148 and 195–297; these read ITCN…LVVE and NLII…LMLN. The Cu cation site is built by His85 and His87. Asn92 and Asn117 each carry an N-linked (GlcNAc...) asparagine glycan. Residues His130 and His132 each contribute to the Cu cation site. Residues Asn199, Asn203, Asn249, Asn270, Asn297, Asn364, and Asn413 are each glycosylated (N-linked (GlcNAc...) asparagine). The Plastocyanin-like 3 domain maps to 387–506; sequence NPLVYGTNTN…QGLALLLIEA (120 aa). His418, His421, His423, His488, Cys489, His490, and His494 together coordinate Cu cation. Residues 565–585 form a helical membrane-spanning segment; that stretch reads GIVAMTFSCLAGVLGLISLST. Over 586–630 the chain is Cytoplasmic; it reads YGLMGVKKSEEEIIRDLGMDPDAVEKVDVSDINSDEDSSRTSKNI. A disordered region spans residues 610-631; the sequence is EKVDVSDINSDEDSSRTSKNIE. The segment covering 622 to 631 has biased composition (basic and acidic residues); the sequence is DSSRTSKNIE.

The protein belongs to the multicopper oxidase family. The cofactor is Cu cation.

It is found in the cell membrane. In terms of biological role, iron transport multicopper ferroxidase required for Fe(2+) high affinity uptake. Required to oxidize Fe(2+) and release it from the transporter. Essential component of copper-dependent iron transport. This chain is Iron transport multicopper oxidase FET3 (FET3), found in Kluyveromyces lactis (strain ATCC 8585 / CBS 2359 / DSM 70799 / NBRC 1267 / NRRL Y-1140 / WM37) (Yeast).